The following is a 140-amino-acid chain: FAD synthase (140 aa).

Residues 9-10 (TF), 14-17 (HPGH), Asn92, and Tyr119 contribute to the ATP site.

Belongs to the archaeal FAD synthase family. As to quaternary structure, homodimer. It depends on a divalent metal cation as a cofactor.

It catalyses the reaction FMN + ATP + H(+) = FAD + diphosphate. Its pathway is cofactor biosynthesis; FAD biosynthesis; FAD from FMN: step 1/1. In terms of biological role, catalyzes the transfer of the AMP portion of ATP to flavin mononucleotide (FMN) to produce flavin adenine dinucleotide (FAD) coenzyme. The chain is FAD synthase from Methanocorpusculum labreanum (strain ATCC 43576 / DSM 4855 / Z).